Consider the following 300-residue polypeptide: GTPase Era (300 aa).

One can recognise an Era-type G domain in the interval 4–173; that stretch reads KYGIVAIVGK…INTIKNYLHK (170 aa). Residues 12 to 19 are G1; that stretch reads GKPNVGKS. Residue 12–19 participates in GTP binding; that stretch reads GKPNVGKS. Positions 38–42 are G2; sequence QTTRN. The interval 59–62 is G3; it reads DTPG. GTP is bound by residues 59-63 and 122-125; these read DTPGF and SKAE. The interval 122–125 is G4; sequence SKAE. Positions 152-154 are G5; sequence ISA. One can recognise a KH type-2 domain in the interval 204-282; it reads LNHEVPHGVG…SLTIFVKVEN (79 aa).

Belongs to the TRAFAC class TrmE-Era-EngA-EngB-Septin-like GTPase superfamily. Era GTPase family. As to quaternary structure, monomer.

It localises to the cytoplasm. It is found in the cell membrane. Its function is as follows. An essential GTPase that binds both GDP and GTP, with rapid nucleotide exchange. Plays a role in 16S rRNA processing and 30S ribosomal subunit biogenesis and possibly also in cell cycle regulation and energy metabolism. This is GTPase Era from Ureaplasma parvum serovar 3 (strain ATCC 27815 / 27 / NCTC 11736).